We begin with the raw amino-acid sequence, 534 residues long: Cytochrome P450 714B1 (534 aa).

Met1 is a topological domain (lumenal). Residues 2 to 22 traverse the membrane as a helical; Signal-anchor for type III membrane protein segment; that stretch reads VVVVAAAMAAASLCCGVAAYL. Residues 23–534 are Cytoplasmic-facing; it reads YYVLWLAPER…RSKCDWAGFD (512 aa). Cys472 is a binding site for heme.

Belongs to the cytochrome P450 family. The cofactor is heme. In terms of tissue distribution, highly expressed in spikelet and uppermost internode. Detected in shoots, roots, leaves and anthers.

The protein localises to the membrane. Catalyzes the 13-hydroxylation of gibberellins (GAs). Determines the ratio of GA4 and GA1. Converts GA12 into GA53. This Oryza sativa subsp. japonica (Rice) protein is Cytochrome P450 714B1 (CYP714B1).